Consider the following 142-residue polypeptide: Coactosin-like protein (142 aa).

Ala2 is subject to N-acetylalanine. The ADF-H domain occupies 2–130 (ATKIDKEACR…EEDFIKSELK (129 aa)). A flexible and important for F-actin binding region spans residues 66-75 (TGDAMSKRSK). Lys102 and Lys126 each carry N6-acetyllysine.

It belongs to the actin-binding proteins ADF family. Coactosin subfamily. In terms of assembly, interacts with 5-lipoxygenase (ALOX5/5LO) in a calcium-independent manner. Binds to F-actin with a stoichiometry of 1:2. Widely expressed with highest levels in placenta, lung, kidney and peripheral blood leukocytes and lower levels in brain, liver and pancreas.

The protein localises to the cytoplasm. It localises to the cytoskeleton. Its subcellular location is the nucleus. Functionally, binds to F-actin in a calcium-independent manner. Has no direct effect on actin depolymerization. Acts as a chaperone for ALOX5 (5LO), influencing both its stability and activity in leukotrienes synthesis. In Homo sapiens (Human), this protein is Coactosin-like protein (COTL1).